The chain runs to 378 residues: Outer membrane protein (378 aa).

Residues 1–22 (MRLRTALLATTLMAAAPVAANA) form the signal peptide. One can recognise an OmpA-like domain in the interval 258-378 (PPAPTPARTY…QNRRVEIILH (121 aa)).

The protein resides in the cell outer membrane. Its function is as follows. Growth enhancer. This Gluconacetobacter diazotrophicus (strain ATCC 49037 / DSM 5601 / CCUG 37298 / CIP 103539 / LMG 7603 / PAl5) protein is Outer membrane protein.